A 276-amino-acid chain; its full sequence is Rhomboid protease GlpG (276 aa).

6 helical membrane-spanning segments follow: residues 94–114 (GPFTWAILLICIAVFILQNLL), 142–162 (AFMHFSLMHILFNLLWWWYLG), 169–189 (IGSGKLVVITVISALLSGFVQ), 192–212 (FSGPWFGGLSGVVYALMGYVW), 229–249 (LILFSLVWLIAGWFDVFGMAI), and 252–272 (GAHVAGLATGLAMAFVDTLHG). Ser201 (nucleophile) is an active-site residue. The active site involves His254.

This sequence belongs to the peptidase S54 family.

The protein localises to the cell inner membrane. It catalyses the reaction Cleaves type-1 transmembrane domains using a catalytic dyad composed of serine and histidine that are contributed by different transmembrane domains.. In terms of biological role, rhomboid-type serine protease that catalyzes intramembrane proteolysis. The protein is Rhomboid protease GlpG of Klebsiella pneumoniae (strain 342).